A 245-amino-acid polypeptide reads, in one-letter code: Enolase-phosphatase E1 (245 aa).

This sequence belongs to the HAD-like hydrolase superfamily. MasA/MtnC family. As to quaternary structure, monomer. The cofactor is Mg(2+).

The catalysed reaction is 5-methylsulfanyl-2,3-dioxopentyl phosphate + H2O = 1,2-dihydroxy-5-(methylsulfanyl)pent-1-en-3-one + phosphate. It participates in amino-acid biosynthesis; L-methionine biosynthesis via salvage pathway; L-methionine from S-methyl-5-thio-alpha-D-ribose 1-phosphate: step 3/6. Its pathway is amino-acid biosynthesis; L-methionine biosynthesis via salvage pathway; L-methionine from S-methyl-5-thio-alpha-D-ribose 1-phosphate: step 4/6. Functionally, bifunctional enzyme that catalyzes the enolization of 2,3-diketo-5-methylthiopentyl-1-phosphate (DK-MTP-1-P) into the intermediate 2-hydroxy-3-keto-5-methylthiopentenyl-1-phosphate (HK-MTPenyl-1-P), which is then dephosphorylated to form the acireductone 1,2-dihydroxy-3-keto-5-methylthiopentene (DHK-MTPene). The polypeptide is Enolase-phosphatase E1 (Synechococcus sp. (strain CC9902)).